A 180-amino-acid chain; its full sequence is METEVHEAAGAAGHAGQAVGMPQLNFDYWPNQIFWLLVTLVAIYFLLTRVALPRIGAVLAERRGTITNDLAAAEELKQKAVLAEKAYNEALAKARAEAQAIVAETRAAIQAELDEATAKADAEISAKSAESEARIAEIRAGALQSVSEVAKDTAEALVAALGGKSDAAAVDAAVAARMKG.

Residues 33–53 (IFWLLVTLVAIYFLLTRVALP) form a helical membrane-spanning segment.

The protein belongs to the ATPase B chain family. F-type ATPases have 2 components, F(1) - the catalytic core - and F(0) - the membrane proton channel. F(1) has five subunits: alpha(3), beta(3), gamma(1), delta(1), epsilon(1). F(0) has three main subunits: a(1), b(2) and c(10-14). The alpha and beta chains form an alternating ring which encloses part of the gamma chain. F(1) is attached to F(0) by a central stalk formed by the gamma and epsilon chains, while a peripheral stalk is formed by the delta and b chains.

The protein localises to the cell inner membrane. In terms of biological role, f(1)F(0) ATP synthase produces ATP from ADP in the presence of a proton or sodium gradient. F-type ATPases consist of two structural domains, F(1) containing the extramembraneous catalytic core and F(0) containing the membrane proton channel, linked together by a central stalk and a peripheral stalk. During catalysis, ATP synthesis in the catalytic domain of F(1) is coupled via a rotary mechanism of the central stalk subunits to proton translocation. Component of the F(0) channel, it forms part of the peripheral stalk, linking F(1) to F(0). The b'-subunit is a diverged and duplicated form of b found in plants and photosynthetic bacteria. In Cereibacter sphaeroides (strain ATCC 17029 / ATH 2.4.9) (Rhodobacter sphaeroides), this protein is ATP synthase subunit b 2 (atpF2).